A 296-amino-acid polypeptide reads, in one-letter code: Ribosomal RNA small subunit methyltransferase A (296 aa).

S-adenosyl-L-methionine is bound by residues Asn30, Leu32, Gly57, Glu78, Asp103, and Asn128.

The protein belongs to the class I-like SAM-binding methyltransferase superfamily. rRNA adenine N(6)-methyltransferase family. RsmA subfamily.

Its subcellular location is the cytoplasm. It catalyses the reaction adenosine(1518)/adenosine(1519) in 16S rRNA + 4 S-adenosyl-L-methionine = N(6)-dimethyladenosine(1518)/N(6)-dimethyladenosine(1519) in 16S rRNA + 4 S-adenosyl-L-homocysteine + 4 H(+). Specifically dimethylates two adjacent adenosines (A1518 and A1519) in the loop of a conserved hairpin near the 3'-end of 16S rRNA in the 30S particle. May play a critical role in biogenesis of 30S subunits. This is Ribosomal RNA small subunit methyltransferase A from Macrococcus caseolyticus (strain JCSC5402) (Macrococcoides caseolyticum).